We begin with the raw amino-acid sequence, 524 residues long: Unconventional prefoldin RPB5 interactor (524 aa).

Disordered regions lie at residues 1-20 (MEAP…LRAP), 284-320 (SVNG…EDNS), and 335-373 (VRIN…ELPM). Over residues 296–307 (DDGDNNDDGGDS) the composition is skewed to acidic residues. S361 is subject to Phosphoserine; by RPS6KB1. S431 is subject to Phosphoserine.

Belongs to the RNA polymerase II subunit 5-mediating protein family. Homodimer. Component of the PAQosome complex which is responsible for the biogenesis of several protein complexes and which consists of R2TP complex members RUVBL1, RUVBL2, RPAP3 and PIH1D1, URI complex members PFDN2, PFDN6, PDRG1, UXT and URI1 as well as ASDURF, POLR2E and DNAAF10/WDR92. Interacts with POLR2E/RPB5, RUVBL2 and RUVBL1. Interacts with PFDN2, PFDN4 and STAP1; the interactions are phosphorylation-dependent and occur in a growth-dependent manner in the mitochondrion. Interacts with UXT. Interacts with PPP1CC; the interaction is phosphorylation-dependent and occurs in a growth factor-dependent manner. Interacts (via the middle C-terminal region) with GTF2F1 and GTF2F2. Interacts with DMAP1. Interacts with TSC1 and TSC2. Interacts with PRPF8 and EFTUD2 in a ZNHIT2-dependent manner. In terms of processing, phosphorylated. Phosphorylation occurs essentially on serine residues. Phosphorylation occurs in response to androgen treatment in prostate cancer cells in a mTOR-dependent manner. Phosphorylated; hyperhosphorylated in mitochondria in a mTORC-dependent signaling pathway. Phosphorylated at Ser-361 by RPS6KB1 in a growth factor- and rapamycin-dependent manner. S6K1-mediated mitochondrial phosphorylation at Ser-361 disrupts the URI1-PPP1CC complex in the mitochondrion, relieves PPP1CC phosphatase inhibition activity and hence engages a negative feedback diminishing RPS6KB1 kinase activity, preventing sustained S6K1-dependent signaling.

The protein resides in the nucleus. Its subcellular location is the cytoplasm. It is found in the mitochondrion. It localises to the cell projection. The protein localises to the dendrite. Involved in gene transcription regulation. Acts as a transcriptional repressor in concert with the corepressor UXT to regulate androgen receptor (AR) transcription. May act as a tumor suppressor to repress AR-mediated gene transcription and to inhibit anchorage-independent growth in prostate cancer cells. Required for cell survival in ovarian cancer cells. Together with UXT, associates with chromatin to the NKX3-1 promoter region. Its function is as follows. Plays a central role in maintaining S6K1 signaling and BAD phosphorylation under normal growth conditions thereby protecting cells from potential deleterious effects of sustained S6K1 signaling. The URI1-PPP1CC complex acts as a central component of a negative feedback mechanism that counteracts excessive S6K1 survival signaling to BAD in response to growth factors. Mediates inhibition of PPP1CC phosphatase activity in mitochondria. Coordinates the regulation of nutrient-sensitive gene expression availability in a mTOR-dependent manner. Seems to be a scaffolding protein able to assemble a prefoldin-like complex that contains PFDs and proteins with roles in transcription and ubiquitination. This Bos taurus (Bovine) protein is Unconventional prefoldin RPB5 interactor (URI1).